Reading from the N-terminus, the 224-residue chain is Late embryogenesis abundant protein, group 3 (224 aa).

Disordered stretches follow at residues 1–169 (MASN…KDKT) and 193–224 (NTLG…TRNH). A compositionally biased stretch (basic and acidic residues) spans 13-23 (GETKARNEEKT). 5 consecutive repeat copies span residues 26–36 (VMGATKDKAGQ), 37–47 (TTEATKQKAGE), 48–58 (TTEATKQKAAE), 59–69 (TTEAAKQKASE), and 70–80 (TAEATKQKAAE). Residues 26–153 (VMGATKDKAG…TEAAKQKASE (128 aa)) are 12 X 11 AA tandem repeats. Basic and acidic residues-rich tracts occupy residues 41–85 (TKQK…KDKT), 92–109 (AKEK…RAAQ), and 120–151 (EKTE…KQKA). The stretch at 81 to 87 (AKDKTAQ) is one 6; truncated repeat. Repeat copies occupy residues 88 to 98 (TAQAAKEKTYE), 99 to 109 (TAQSAKERAAQ), 121 to 131 (KTEAAKQKAAE), 132 to 142 (TTEAARQKAAE), and 143 to 153 (ATEAAKQKASE). Residues 200–224 (DNTITTKDNTTGATTKDTTTTTRNH) are compositionally biased toward low complexity.

This sequence belongs to the LEA type 4 family.

In Triticum aestivum (Wheat), this protein is Late embryogenesis abundant protein, group 3.